A 396-amino-acid chain; its full sequence is Tyrosine--tRNA ligase (396 aa).

Residues 39–48 (PTAPDLHLGH) carry the 'HIGH' region motif. The 'KMSKS' region motif lies at 223–227 (KMSKS). ATP is bound at residue Lys-226. Residues 334 to 395 (LPVPQLLKQA…GKRKFARVTV (62 aa)) form the S4 RNA-binding domain.

This sequence belongs to the class-I aminoacyl-tRNA synthetase family. TyrS type 2 subfamily. In terms of assembly, homodimer.

The protein resides in the cytoplasm. It catalyses the reaction tRNA(Tyr) + L-tyrosine + ATP = L-tyrosyl-tRNA(Tyr) + AMP + diphosphate + H(+). In terms of biological role, catalyzes the attachment of tyrosine to tRNA(Tyr) in a two-step reaction: tyrosine is first activated by ATP to form Tyr-AMP and then transferred to the acceptor end of tRNA(Tyr). The sequence is that of Tyrosine--tRNA ligase from Thiobacillus denitrificans (strain ATCC 25259 / T1).